The sequence spans 377 residues: MAKKDYYEILGVSREADEREIKKAYKRLAMKYHPDRNQGDKEAEDKFKEIKEAYEILTDAQKRAAYDQYGHAAFEQGGMGGGGGGFGGGADFSDIFGDVFGDIFGGGRRQRAARGADLRYNMDLTLEEAVRGVTKEIRIPTLAECDVCHGSGAKKGSEPITCPTCHGAGQVQMRQGFFTVQQPCPHCHGRGTIIKDPCNKCHGHGRIEKSKTLSVKIPAGVDTGDRIRLAGEGEAGENGAPAGDLYVQVQVKAHPIFEREDNNLFCEVPINFAMAALGGEIEVPTLDGRVNLKIPAETQTGKMFRMRGRGVKSVRGGAQGDLLCRVVVETPVNLNDKQKQLLRELEESFGGPASDKNSPRSKRFFDGVKKFFDDLTR.

One can recognise a J domain in the interval 5 to 70 (DYYEILGVSR…QKRAAYDQYG (66 aa)). The segment at 132–210 (GVTKEIRIPT…CHGHGRIEKS (79 aa)) adopts a CR-type zinc-finger fold. Residues cysteine 145, cysteine 148, cysteine 162, cysteine 165, cysteine 184, cysteine 187, cysteine 198, and cysteine 201 each contribute to the Zn(2+) site. CXXCXGXG motif repeat units lie at residues 145 to 152 (CDVCHGSG), 162 to 169 (CPTCHGAG), 184 to 191 (CPHCHGRG), and 198 to 205 (CNKCHGHG).

The protein belongs to the DnaJ family. Homodimer. Zn(2+) serves as cofactor.

It is found in the cytoplasm. Its function is as follows. Participates actively in the response to hyperosmotic and heat shock by preventing the aggregation of stress-denatured proteins and by disaggregating proteins, also in an autonomous, DnaK-independent fashion. Unfolded proteins bind initially to DnaJ; upon interaction with the DnaJ-bound protein, DnaK hydrolyzes its bound ATP, resulting in the formation of a stable complex. GrpE releases ADP from DnaK; ATP binding to DnaK triggers the release of the substrate protein, thus completing the reaction cycle. Several rounds of ATP-dependent interactions between DnaJ, DnaK and GrpE are required for fully efficient folding. Also involved, together with DnaK and GrpE, in the DNA replication of plasmids through activation of initiation proteins. In Edwardsiella ictaluri (strain 93-146), this protein is Chaperone protein DnaJ.